The chain runs to 375 residues: Alcohol dehydrogenase 1C (375 aa).

N-acetylserine is present on Ser-2. Phosphoserine is present on Ser-23. Zn(2+) contacts are provided by Cys-47, His-68, Cys-98, Cys-101, Cys-104, Cys-112, and Cys-175. Residues 200 to 205, Asp-224, Lys-229, Ile-270, 293 to 295, 318 to 320, and Arg-370 contribute to the NAD(+) site; these read GLGGVG, VGV, and AIF.

It belongs to the zinc-containing alcohol dehydrogenase family. In terms of assembly, dimer of identical or non-identical chains of class I alcohol dehydrogenase: ADH1A, ADH1B, and ADH1C. Zn(2+) serves as cofactor.

It localises to the cytoplasm. The enzyme catalyses a primary alcohol + NAD(+) = an aldehyde + NADH + H(+). The catalysed reaction is ethanol + NAD(+) = acetaldehyde + NADH + H(+). In terms of biological role, alcohol dehydrogenase. Exhibits high activity for ethanol oxidation and plays a major role in ethanol catabolism. This Homo sapiens (Human) protein is Alcohol dehydrogenase 1C (ADH1C).